The following is a 25-amino-acid chain: ATP-dependent 6-phosphofructokinase 2 (25 aa).

G11 serves as a coordination point for ATP.

It belongs to the phosphofructokinase type A (PFKA) family. ATP-dependent PFK group I subfamily. Prokaryotic clade 'B1' sub-subfamily. As to quaternary structure, homotetramer. It depends on Mg(2+) as a cofactor.

It localises to the cytoplasm. The catalysed reaction is beta-D-fructose 6-phosphate + ATP = beta-D-fructose 1,6-bisphosphate + ADP + H(+). It functions in the pathway carbohydrate degradation; glycolysis; D-glyceraldehyde 3-phosphate and glycerone phosphate from D-glucose: step 3/4. Its activity is regulated as follows. In contrast with PFK1 this enzyme is not affected by phosphoenolpyruvate. In terms of biological role, catalyzes the phosphorylation of D-fructose 6-phosphate to fructose 1,6-bisphosphate by ATP, the first committing step of glycolysis. This is ATP-dependent 6-phosphofructokinase 2 (pfkA2) from Thermus thermophilus (strain ATCC 27634 / DSM 579 / HB8).